A 50-amino-acid chain; its full sequence is MARYRCCRSQSRSRCYRQRRRGRRRRRRTCRRRRASRCCRRRYKLTCRRY.

The protein belongs to the protamine P1 family. Cross-linked by interchain disulfide bonds around the DNA-helix. In terms of tissue distribution, testis.

It localises to the nucleus. Its subcellular location is the chromosome. Functionally, protamines substitute for histones in the chromatin of sperm during the haploid phase of spermatogenesis. They compact sperm DNA into a highly condensed, stable and inactive complex. The chain is Sperm protamine P1 (PRM1) from Saguinus imperator (Emperor tamarin).